Reading from the N-terminus, the 242-residue chain is MVTPKFRRVILKLSGEALAGQKGYGIDPEVVYSIASQIKDVLEHRVQLAIVVGGGNIWRGISGSTKGMDRATADYMGMLATVINSLALQDALEKIEVDTRVQTSFEMRAVAETYIRRRAIRHMEKGRVVIFAAGTGNPYFSTDTTAALRAAEVEAEIILMAKQVDGVYDADPLKHPGAKRFDELTYIDVLNRGLQVMDSTAVSLCMDNKIPLLVFDLNTEGNIKRAILGERIGTFVGGDLNG.

Residue 12-15 (KLSG) coordinates ATP. The interval 20–25 (GQKGYG) is involved in allosteric activation by GTP. Gly-54 contacts UMP. Residues Gly-55 and Arg-59 each contribute to the ATP site. UMP is bound by residues Asp-74 and 135 to 142 (TGNPYFST). Positions 163, 168, and 171 each coordinate ATP.

The protein belongs to the UMP kinase family. As to quaternary structure, homohexamer.

It is found in the cytoplasm. It carries out the reaction UMP + ATP = UDP + ADP. The protein operates within pyrimidine metabolism; CTP biosynthesis via de novo pathway; UDP from UMP (UMPK route): step 1/1. Its activity is regulated as follows. Allosterically activated by GTP. Inhibited by UTP. Its function is as follows. Catalyzes the reversible phosphorylation of UMP to UDP. This is Uridylate kinase from Desulforamulus reducens (strain ATCC BAA-1160 / DSM 100696 / MI-1) (Desulfotomaculum reducens).